The chain runs to 85 residues: uncharacterized protein (85 aa).

This sequence to A.fulgidus AF_0255 and AF_1363.

This is an uncharacterized protein from Archaeoglobus fulgidus (strain ATCC 49558 / DSM 4304 / JCM 9628 / NBRC 100126 / VC-16).